Here is a 682-residue protein sequence, read N- to C-terminus: Probable potassium transport system protein Kup (682 aa).

12 consecutive transmembrane segments (helical) span residues 13–33 (GLLV…LYVM), 55–75 (ISLI…LIAL), 98–118 (WLVI…TLTP), 138–158 (IPVP…LFLF), 171–191 (TFGP…IMNL), 217–237 (VGVL…ALYS), 250–270 (SWPY…VWIL), 295–315 (FFAI…LITG), 344–364 (LFIP…VFLF), 375–395 (GLAI…YLSL), 405–425 (VFLL…LAKF), and 428–448 (GGYV…IWYF).

It belongs to the HAK/KUP transporter (TC 2.A.72) family.

It is found in the cell membrane. The enzyme catalyses K(+)(in) + H(+)(in) = K(+)(out) + H(+)(out). In terms of biological role, transport of potassium into the cell. Likely operates as a K(+):H(+) symporter. The chain is Probable potassium transport system protein Kup from Lactobacillus gasseri (strain ATCC 33323 / DSM 20243 / BCRC 14619 / CIP 102991 / JCM 1131 / KCTC 3163 / NCIMB 11718 / NCTC 13722 / AM63).